A 523-amino-acid chain; its full sequence is WD repeat-containing protein WDS homolog (523 aa).

Positions 16–48 constitute a LisH domain; that stretch reads KKHEFIRILVQCLYSLGFKNSASCLEFESKILY. One can recognise a CTLH domain in the interval 49-107; that stretch reads KTADSEFLEKQVLSGNWDSCVQVLDRIFDNSMDDTRNTALYLVFKQCLLEYLKRGDVSL. 7 WD repeats span residues 222–261, 267–306, 310–353, 355–394, 395–434, 438–480, and 483–523; these read AHKN…KVEL, SHQN…LRHT, NNTG…KAWR, TRIP…ERVI, SEEQ…KQPL, GHRQ…PLEV, and GHSM…KPLN.

Interacts with RANBPM.

Its subcellular location is the cytoplasm. This chain is WD repeat-containing protein WDS homolog, found in Arabidopsis thaliana (Mouse-ear cress).